A 575-amino-acid chain; its full sequence is Phosphoenolpyruvate-protein phosphotransferase (575 aa).

The active-site Tele-phosphohistidine intermediate is His191. Positions 298 and 334 each coordinate phosphoenolpyruvate. Mg(2+)-binding residues include Glu435 and Asp459. Phosphoenolpyruvate contacts are provided by residues 458-459 (ND) and Arg469. Cys506 (proton donor) is an active-site residue.

Belongs to the PEP-utilizing enzyme family. As to quaternary structure, homodimer. Requires Mg(2+) as cofactor.

It is found in the cytoplasm. It carries out the reaction L-histidyl-[protein] + phosphoenolpyruvate = N(pros)-phospho-L-histidyl-[protein] + pyruvate. Its function is as follows. General (non sugar-specific) component of the phosphoenolpyruvate-dependent sugar phosphotransferase system (sugar PTS). This major carbohydrate active-transport system catalyzes the phosphorylation of incoming sugar substrates concomitantly with their translocation across the cell membrane. Enzyme I transfers the phosphoryl group from phosphoenolpyruvate (PEP) to the phosphoryl carrier protein (HPr). This is Phosphoenolpyruvate-protein phosphotransferase (ptsI) from Enterococcus faecalis (strain ATCC 700802 / V583).